A 241-amino-acid polypeptide reads, in one-letter code: Deoxyribose-phosphate aldolase (241 aa).

Residue Asp95 is the Proton donor/acceptor of the active site. Lys159 serves as the catalytic Schiff-base intermediate with acetaldehyde. Lys188 (proton donor/acceptor) is an active-site residue.

This sequence belongs to the DeoC/FbaB aldolase family. DeoC type 1 subfamily.

The protein localises to the cytoplasm. The enzyme catalyses 2-deoxy-D-ribose 5-phosphate = D-glyceraldehyde 3-phosphate + acetaldehyde. The protein operates within carbohydrate degradation; 2-deoxy-D-ribose 1-phosphate degradation; D-glyceraldehyde 3-phosphate and acetaldehyde from 2-deoxy-alpha-D-ribose 1-phosphate: step 2/2. Functionally, catalyzes a reversible aldol reaction between acetaldehyde and D-glyceraldehyde 3-phosphate to generate 2-deoxy-D-ribose 5-phosphate. This Rhodopirellula baltica (strain DSM 10527 / NCIMB 13988 / SH1) protein is Deoxyribose-phosphate aldolase.